A 274-amino-acid polypeptide reads, in one-letter code: 3',5'-cyclic adenosine monophosphate phosphodiesterase CpdA (274 aa).

Aspartate 21, histidine 23, aspartate 63, asparagine 93, histidine 163, histidine 202, and histidine 204 together coordinate Fe cation. Residues histidine 23, aspartate 63, and 93-94 (NH) each bind AMP. Position 204 (histidine 204) interacts with AMP.

Belongs to the cyclic nucleotide phosphodiesterase class-III family. Fe(2+) serves as cofactor.

The enzyme catalyses 3',5'-cyclic AMP + H2O = AMP + H(+). Hydrolyzes cAMP to 5'-AMP. Plays an important regulatory role in modulating the intracellular concentration of cAMP, thereby influencing cAMP-dependent processes. May coordinate responses to nutritional stress, ensuring optimal competence development. In Haemophilus influenzae (strain ATCC 51907 / DSM 11121 / KW20 / Rd), this protein is 3',5'-cyclic adenosine monophosphate phosphodiesterase CpdA.